The following is a 258-amino-acid chain: Cytochrome P450 1A2 (258 aa).

Belongs to the cytochrome P450 family. Heme serves as cofactor.

Its subcellular location is the endoplasmic reticulum membrane. The protein resides in the microsome membrane. The catalysed reaction is an organic molecule + reduced [NADPH--hemoprotein reductase] + O2 = an alcohol + oxidized [NADPH--hemoprotein reductase] + H2O + H(+). In terms of biological role, cytochromes P450 are a group of heme-thiolate monooxygenases. In liver microsomes, this enzyme is involved in an NADPH-dependent electron transport pathway. It oxidizes a variety of structurally unrelated compounds, including steroids, fatty acids, and xenobiotics. In Gallus gallus (Chicken), this protein is Cytochrome P450 1A2 (CYP1A2).